We begin with the raw amino-acid sequence, 636 residues long: 1-deoxy-D-xylulose-5-phosphate synthase (636 aa).

Residues His77 and 118–120 contribute to the thiamine diphosphate site; that span reads GHS. Residue Asp149 coordinates Mg(2+). Residues 150–151, Asn178, Tyr290, and Glu375 contribute to the thiamine diphosphate site; that span reads GA. Position 178 (Asn178) interacts with Mg(2+).

The protein belongs to the transketolase family. DXPS subfamily. Homodimer. The cofactor is Mg(2+). Thiamine diphosphate is required as a cofactor.

It catalyses the reaction D-glyceraldehyde 3-phosphate + pyruvate + H(+) = 1-deoxy-D-xylulose 5-phosphate + CO2. It participates in metabolic intermediate biosynthesis; 1-deoxy-D-xylulose 5-phosphate biosynthesis; 1-deoxy-D-xylulose 5-phosphate from D-glyceraldehyde 3-phosphate and pyruvate: step 1/1. Catalyzes the acyloin condensation reaction between C atoms 2 and 3 of pyruvate and glyceraldehyde 3-phosphate to yield 1-deoxy-D-xylulose-5-phosphate (DXP). The sequence is that of 1-deoxy-D-xylulose-5-phosphate synthase from Cytophaga hutchinsonii (strain ATCC 33406 / DSM 1761 / CIP 103989 / NBRC 15051 / NCIMB 9469 / D465).